The primary structure comprises 166 residues: Regulatory protein RecX (166 aa).

This sequence belongs to the RecX family.

It is found in the cytoplasm. In terms of biological role, modulates RecA activity. This is Regulatory protein RecX from Escherichia fergusonii (strain ATCC 35469 / DSM 13698 / CCUG 18766 / IAM 14443 / JCM 21226 / LMG 7866 / NBRC 102419 / NCTC 12128 / CDC 0568-73).